Reading from the N-terminus, the 63-residue chain is Hyphancin-3F (63 aa).

An N-terminal signal peptide occupies residues 1–22 (MNFSRILFFVFACFVALASVSA). A propeptide spans 23-26 (APEP) (removed by a dipeptidylpeptidase). Leu-61 carries the post-translational modification Leucine amide.

It belongs to the cecropin family.

It localises to the secreted. Has antibacterial activity. The protein is Hyphancin-3F of Hyphantria cunea (Fall webworm moth).